Reading from the N-terminus, the 858-residue chain is Phosphoenolpyruvate carboxylase (858 aa).

Residues His145 and Lys531 contribute to the active site.

It belongs to the PEPCase type 1 family. The cofactor is Mg(2+).

The catalysed reaction is oxaloacetate + phosphate = phosphoenolpyruvate + hydrogencarbonate. Forms oxaloacetate, a four-carbon dicarboxylic acid source for the tricarboxylic acid cycle. This Thermus thermophilus (strain ATCC BAA-163 / DSM 7039 / HB27) protein is Phosphoenolpyruvate carboxylase.